A 64-amino-acid polypeptide reads, in one-letter code: Large ribosomal subunit protein bL35 (64 aa).

Residues 1–25 form a disordered region; it reads MPKMKTHRGAAKRLKKTGTGKLKRA.

This sequence belongs to the bacterial ribosomal protein bL35 family.

The polypeptide is Large ribosomal subunit protein bL35 (Clostridioides difficile (strain 630) (Peptoclostridium difficile)).